A 207-amino-acid chain; its full sequence is Small ribosomal subunit protein uS4 (207 aa).

The disordered stretch occupies residues lysine 31–tyrosine 52. One can recognise an S4 RNA-binding domain in the interval cysteine 97–valine 157.

Belongs to the universal ribosomal protein uS4 family. Part of the 30S ribosomal subunit. Contacts protein S5. The interaction surface between S4 and S5 is involved in control of translational fidelity.

In terms of biological role, one of the primary rRNA binding proteins, it binds directly to 16S rRNA where it nucleates assembly of the body of the 30S subunit. Its function is as follows. With S5 and S12 plays an important role in translational accuracy. The protein is Small ribosomal subunit protein uS4 of Acidovorax sp. (strain JS42).